We begin with the raw amino-acid sequence, 162 residues long: Ribosome-binding factor A (162 aa).

The segment at 124-162 (ARVRSGAKPAGEADPYRESGSGVEPGRDGSIGDDDQPEY) is disordered.

The protein belongs to the RbfA family. As to quaternary structure, monomer. Binds 30S ribosomal subunits, but not 50S ribosomal subunits or 70S ribosomes.

The protein localises to the cytoplasm. In terms of biological role, one of several proteins that assist in the late maturation steps of the functional core of the 30S ribosomal subunit. Associates with free 30S ribosomal subunits (but not with 30S subunits that are part of 70S ribosomes or polysomes). Required for efficient processing of 16S rRNA. May interact with the 5'-terminal helix region of 16S rRNA. This chain is Ribosome-binding factor A, found in Mycolicibacterium paratuberculosis (strain ATCC BAA-968 / K-10) (Mycobacterium paratuberculosis).